The chain runs to 358 residues: UDP-N-acetylglucosamine--N-acetylmuramyl-(pentapeptide) pyrophosphoryl-undecaprenol N-acetylglucosamine transferase (358 aa).

UDP-N-acetyl-alpha-D-glucosamine-binding positions include 11 to 13 (TGG), Asn120, Arg161, Ser188, and Gln282.

It belongs to the glycosyltransferase 28 family. MurG subfamily.

The protein localises to the cell inner membrane. It carries out the reaction di-trans,octa-cis-undecaprenyl diphospho-N-acetyl-alpha-D-muramoyl-L-alanyl-D-glutamyl-meso-2,6-diaminopimeloyl-D-alanyl-D-alanine + UDP-N-acetyl-alpha-D-glucosamine = di-trans,octa-cis-undecaprenyl diphospho-[N-acetyl-alpha-D-glucosaminyl-(1-&gt;4)]-N-acetyl-alpha-D-muramoyl-L-alanyl-D-glutamyl-meso-2,6-diaminopimeloyl-D-alanyl-D-alanine + UDP + H(+). Its pathway is cell wall biogenesis; peptidoglycan biosynthesis. Functionally, cell wall formation. Catalyzes the transfer of a GlcNAc subunit on undecaprenyl-pyrophosphoryl-MurNAc-pentapeptide (lipid intermediate I) to form undecaprenyl-pyrophosphoryl-MurNAc-(pentapeptide)GlcNAc (lipid intermediate II). The chain is UDP-N-acetylglucosamine--N-acetylmuramyl-(pentapeptide) pyrophosphoryl-undecaprenol N-acetylglucosamine transferase from Synechococcus sp. (strain CC9605).